The sequence spans 356 residues: Mannonate dehydratase 2 (356 aa).

Belongs to the mannonate dehydratase family. Fe(2+) is required as a cofactor. Requires Mn(2+) as cofactor.

The catalysed reaction is D-mannonate = 2-dehydro-3-deoxy-D-gluconate + H2O. It functions in the pathway carbohydrate metabolism; pentose and glucuronate interconversion. Its function is as follows. Catalyzes the dehydration of D-mannonate. The sequence is that of Mannonate dehydratase 2 from Bacillus licheniformis (strain ATCC 14580 / DSM 13 / JCM 2505 / CCUG 7422 / NBRC 12200 / NCIMB 9375 / NCTC 10341 / NRRL NRS-1264 / Gibson 46).